Consider the following 585-residue polypeptide: Arginine--tRNA ligase (585 aa).

A 'HIGH' region motif is present at residues 126–136 (PNIAKEMHVGH).

Belongs to the class-I aminoacyl-tRNA synthetase family. In terms of assembly, monomer.

The protein localises to the cytoplasm. It carries out the reaction tRNA(Arg) + L-arginine + ATP = L-arginyl-tRNA(Arg) + AMP + diphosphate. The sequence is that of Arginine--tRNA ligase from Picosynechococcus sp. (strain ATCC 27264 / PCC 7002 / PR-6) (Agmenellum quadruplicatum).